The primary structure comprises 75 residues: Small ribosomal subunit protein bS16 (75 aa).

It belongs to the bacterial ribosomal protein bS16 family.

This Nitratiruptor sp. (strain SB155-2) protein is Small ribosomal subunit protein bS16.